A 127-amino-acid polypeptide reads, in one-letter code: MLQLLLAVFIGGGTGSVARWLLSMRFNPLHQAIPLGTLAANLIGAFIIGMGFAWFSRMTNIDPVWKVLITTGFCGGLTTFSTFSAEVVFLLQEGRLGWALLNVFVNLLGSFAMTALAFWLFSASTAH.

4 helical membrane-spanning segments follow: residues 4–24, 35–55, 71–91, and 103–123; these read LLLAVFIGGGTGSVARWLLSM, LGTLAANLIGAFIIGMGFAWF, TGFCGGLTTFSTFSAEVVFLL, and VFVNLLGSFAMTALAFWLFSA. G75 and T78 together coordinate Na(+).

This sequence belongs to the fluoride channel Fluc/FEX (TC 1.A.43) family.

The protein localises to the cell inner membrane. The enzyme catalyses fluoride(in) = fluoride(out). With respect to regulation, na(+) is not transported, but it plays an essential structural role and its presence is essential for fluoride channel function. Fluoride-specific ion channel. Important for reducing fluoride concentration in the cell, thus reducing its toxicity. The polypeptide is Fluoride-specific ion channel FluC (Escherichia coli O17:K52:H18 (strain UMN026 / ExPEC)).